The primary structure comprises 202 residues: Peptidyl-tRNA hydrolase (202 aa).

Tyr14 is a binding site for tRNA. The active-site Proton acceptor is His19. TRNA contacts are provided by Phe64, Asn66, and Asn112.

This sequence belongs to the PTH family. As to quaternary structure, monomer.

Its subcellular location is the cytoplasm. The enzyme catalyses an N-acyl-L-alpha-aminoacyl-tRNA + H2O = an N-acyl-L-amino acid + a tRNA + H(+). Its function is as follows. Hydrolyzes ribosome-free peptidyl-tRNAs (with 1 or more amino acids incorporated), which drop off the ribosome during protein synthesis, or as a result of ribosome stalling. In terms of biological role, catalyzes the release of premature peptidyl moieties from peptidyl-tRNA molecules trapped in stalled 50S ribosomal subunits, and thus maintains levels of free tRNAs and 50S ribosomes. This chain is Peptidyl-tRNA hydrolase, found in Methylobacterium radiotolerans (strain ATCC 27329 / DSM 1819 / JCM 2831 / NBRC 15690 / NCIMB 10815 / 0-1).